Consider the following 317-residue polypeptide: Acetyl-coenzyme A carboxylase carboxyl transferase subunit alpha (317 aa).

Residues 39–293 (KLEGKAQEAL…GNAIAEAMGS (255 aa)) form the CoA carboxyltransferase C-terminal domain.

This sequence belongs to the AccA family. In terms of assembly, acetyl-CoA carboxylase is a heterohexamer composed of biotin carboxyl carrier protein (AccB), biotin carboxylase (AccC) and two subunits each of ACCase subunit alpha (AccA) and ACCase subunit beta (AccD).

The protein resides in the cytoplasm. The catalysed reaction is N(6)-carboxybiotinyl-L-lysyl-[protein] + acetyl-CoA = N(6)-biotinyl-L-lysyl-[protein] + malonyl-CoA. It functions in the pathway lipid metabolism; malonyl-CoA biosynthesis; malonyl-CoA from acetyl-CoA: step 1/1. Functionally, component of the acetyl coenzyme A carboxylase (ACC) complex. First, biotin carboxylase catalyzes the carboxylation of biotin on its carrier protein (BCCP) and then the CO(2) group is transferred by the carboxyltransferase to acetyl-CoA to form malonyl-CoA. This is Acetyl-coenzyme A carboxylase carboxyl transferase subunit alpha from Azorhizobium caulinodans (strain ATCC 43989 / DSM 5975 / JCM 20966 / LMG 6465 / NBRC 14845 / NCIMB 13405 / ORS 571).